We begin with the raw amino-acid sequence, 117 residues long: Appetite-regulating hormone (117 aa).

An N-terminal signal peptide occupies residues 1–23; that stretch reads MPSPGTVCSLLLFSMLWADLAMA. A lipid anchor (O-decanoyl serine; alternate) is attached at Ser-26. Ser-26 is lipidated: O-hexanoyl serine; alternate. The O-octanoyl serine; alternate moiety is linked to residue Ser-26. The segment at 29 to 52 is disordered; the sequence is SPEHQKVQQRKESKKPPAKLQPRA. The segment covering 31-43 has biased composition (basic and acidic residues); it reads EHQKVQQRKESKK. Residues 52–75 constitute a propeptide, removed in mature form; the sequence is ALEGLIHPEDTSQVEGAEDELEIR. Leu-98 is modified (leucine amide). Positions 99-117 are cleaved as a propeptide — removed in mature form; the sequence is GKFLQDVLWEEADEVLADE.

Belongs to the motilin family. Post-translationally, O-octanoylated by GOAT/MBOAT4. O-octanoylation or O-decanoylation is essential for ghrelin activity. The O-decanoylated forms Ghrelin-27-C10 and Ghrelin-28-C10 differ in the length of the carbon backbone of the carboxylic acid bound to Ser-26. A small fraction of ghrelin, ghrelin-27-C10:1, ghrelin-27-C10:2, ghrelin-28-C8:1, ghrelin-28-C10:1, and ghrelin-28-C10:2, may be modified with singly or doubly unsaturated carboxylic acids. Amidation of Leu-98 is essential for obestatin activity.

The protein resides in the secreted. Ghrelin is the ligand for growth hormone secretagogue receptor type 1 (GHSR). Induces the release of growth hormone from the pituitary. Has an appetite-stimulating effect, induces adiposity and stimulates gastric acid secretion. Involved in growth regulation. In terms of biological role, obestatin may be the ligand for GPR39. May have an appetite-reducing effect resulting in decreased food intake. May reduce gastric emptying activity and jejunal motility. The sequence is that of Appetite-regulating hormone (GHRL) from Felis catus (Cat).